Here is an 871-residue protein sequence, read N- to C-terminus: Dual O-methyltransferase/FAD-dependent monooxygenase CTB3 (871 aa).

The tract at residues 1 to 429 is O-methyltransferase; the sequence is MMQFQRDLEA…GLLTVRSAGQ (429 aa). D279 serves as a coordination point for S-adenosyl-L-methionine. The active-site Proton acceptor is the H331. The FAD-dependent monooxygenase stretch occupies residues 430 to 871; it reads TALSGTNTLT…NLVDCSEFVF (442 aa). FAD-binding residues include E485, R569, D793, and A806.

It in the C-terminal section; belongs to the paxM FAD-dependent monooxygenase family. The protein in the N-terminal section; belongs to the class I-like SAM-binding methyltransferase superfamily. Cation-independent O-methyltransferase family. COMT subfamily.

The enzyme catalyses nor-toralactone + S-adenosyl-L-methionine = toralactone + S-adenosyl-L-homocysteine + H(+). It carries out the reaction toralactone + NADH + O2 + H(+) = 1-(3,4,5-trihydroxy-7-methoxynaphthalen-2-yl)propan-2-one + CO2 + NAD(+). It participates in mycotoxin biosynthesis. In terms of biological role, dual O-methyltransferase/FAD-dependent monooxygenase; part of the gene cluster that mediates the biosynthesis of cercosporin, a light-activated, non-host-selective toxin. The perylenequinone chromophore of cercosporin absorbs light energy to attain an electronically-activated triplet state and produces active oxygen species such as the hydroxyl radical, superoxide, hydrogen peroxide or singlet oxygen upon reaction with oxygen molecules. These reactive oxygen species cause damage to various cellular components including lipids, proteins and nucleic acids. The first step of cercosporin biosynthesis is performed by the polyketide synthase CTB1 which catalyzes the formation of nor-toralactone. The starter unit acyltransferase (SAT) domain of CTB1 initiates polyketide extension by the selective utilization of acetyl-CoA, which is elongated to the heptaketide in the beta-ketoacyl synthase (KS) domain by successive condensations with six malonyl units introduced by the malonyl acyltransferase (MAT) domain. The product template (PT) domain catalyzes C4-C9 and C2-C11 aldol cyclizations and dehydrations to a trihydroxynaphthalene, which is thought to be delivered to the thioesterase (TE) domain for product release. The bifunctional enzyme CTB3 then methylates nor-toralactone to toralactone before conducting an unusual oxidative aromatic ring opening. The O-methyltransferase CTB2 further methylates the nascent OH-6 of the CBT3 product, blocking further oxidation at this site before the reductase CTB6 reduces the 2-oxopropyl ketone at position C7, giving naphthalene. The FAD-dependent monooxygenase CTB5 in concert with the multicopper oxidase CTB12 are responsible for homodimerization of naphthalene with CTB7 installing the dioxepine moiety, finally producing cercosporin. The fasciclin domain-containing protein CTB11 might act with CTB5 and CTB12 whereas the roles of CTB9 and CTB10 have still to be elucidated. The polypeptide is Dual O-methyltransferase/FAD-dependent monooxygenase CTB3 (Cercospora beticola (Sugarbeet leaf spot fungus)).